The chain runs to 476 residues: Aspartyl/glutamyl-tRNA(Asn/Gln) amidotransferase subunit B (476 aa).

The protein belongs to the GatB/GatE family. GatB subfamily. In terms of assembly, heterotrimer of A, B and C subunits.

It carries out the reaction L-glutamyl-tRNA(Gln) + L-glutamine + ATP + H2O = L-glutaminyl-tRNA(Gln) + L-glutamate + ADP + phosphate + H(+). It catalyses the reaction L-aspartyl-tRNA(Asn) + L-glutamine + ATP + H2O = L-asparaginyl-tRNA(Asn) + L-glutamate + ADP + phosphate + 2 H(+). Functionally, allows the formation of correctly charged Asn-tRNA(Asn) or Gln-tRNA(Gln) through the transamidation of misacylated Asp-tRNA(Asn) or Glu-tRNA(Gln) in organisms which lack either or both of asparaginyl-tRNA or glutaminyl-tRNA synthetases. The reaction takes place in the presence of glutamine and ATP through an activated phospho-Asp-tRNA(Asn) or phospho-Glu-tRNA(Gln). The chain is Aspartyl/glutamyl-tRNA(Asn/Gln) amidotransferase subunit B from Listeria innocua serovar 6a (strain ATCC BAA-680 / CLIP 11262).